The sequence spans 943 residues: MTDYKATLNLPDTAFPMKAGLPQREPQILQRWDSIGLYQKLREIGKDRPKFVLHDGPPYANGKIHIGHALNKILKDMIVRSKTLAGFDAPYVPGWDCHGLPIEHKVEVTHGKHLSADRTRELCREYAAEQIEGQKTEFIRLGVLGDWDNPYKTMNFANEAGEIRALAEMVKQGFVFKGLKPVNWCFDCGSALAEAEVEYADKKSQTIDVAFPVADEAKLAAAFGLASLAKPAAIVIWTTTPWTIPANQALNIHPEFKYALVDTGERLLVLAEELVESCLKRYNLEGSVVASAQGSALELINFRHPFYDRLSPIYLADYVELGAGTGVVHSSPAYGEDDFVTCKRYGMVNDDILTPVQSNGVYVDSLPFFGGQFIWKANPAIVEKLSEVGALMHTETISHSYMHCWRHKTPLIYRATAQWFVGMDKQPSTGEPLRERALKAIEDTKFVPAWGQARLHAMIANRPDWCISRQRNWGVPIPFFLHKQTGDLHPRTVELMEEVAKRVEQQGIEAWFKLDAAELLGAEADQYDKIADTLDVWFDSGTTHWHVLRGSHDIGHATGPRADLYLEGSDQHRGWFHSSLLTGCAIDNHAPYRELLTHGFTVDENGRKMSKSLGNTIEPEKVNNTLGADILRLWVSATDYSGEMAVSEQILQRSADAYRRIRNTARFLLSNLSGFDPARDLLAPEDMLALDRWAVDRTLLLQRELEEHYSEYRFWNVYSKVHNFCVQELGGFYLDIIKDRQYTTGANSVARRSCQTALYHISEALVRWIAPILAFTADEIWQYLPGERNESVMLNGWYQGLSELPEGTELDRAYWDRVMAVKASVNKELENQRTAKVIGGNLQAEVTLYADEGLSADLGKLGDELRFVLITSAASVVPFAQAPAEAVATEVEGLKLQVVKSGHTKCGRCWHFRADVGSHPEHPEICGRCVDNLTGSGEVRHYA.

Positions 58–68 match the 'HIGH' region motif; it reads PYANGKIHIGH. Glu567 contributes to the L-isoleucyl-5'-AMP binding site. A 'KMSKS' region motif is present at residues 608 to 612; that stretch reads KMSKS. Lys611 is a binding site for ATP. Zn(2+) is bound by residues Cys906, Cys909, Cys926, and Cys929.

The protein belongs to the class-I aminoacyl-tRNA synthetase family. IleS type 1 subfamily. In terms of assembly, monomer. Zn(2+) serves as cofactor.

The protein resides in the cytoplasm. The catalysed reaction is tRNA(Ile) + L-isoleucine + ATP = L-isoleucyl-tRNA(Ile) + AMP + diphosphate. Its function is as follows. Catalyzes the attachment of isoleucine to tRNA(Ile). As IleRS can inadvertently accommodate and process structurally similar amino acids such as valine, to avoid such errors it has two additional distinct tRNA(Ile)-dependent editing activities. One activity is designated as 'pretransfer' editing and involves the hydrolysis of activated Val-AMP. The other activity is designated 'posttransfer' editing and involves deacylation of mischarged Val-tRNA(Ile). The polypeptide is Isoleucine--tRNA ligase (Pseudomonas putida (strain ATCC 47054 / DSM 6125 / CFBP 8728 / NCIMB 11950 / KT2440)).